Consider the following 276-residue polypeptide: Large ribosomal subunit protein uL2c (276 aa).

The segment at 221–276 (RGSVMNPVDHPHGGGEGRAPIGRSRPVTPWGKPALGQKTRKPKKQSNKLILRKRKK) is disordered. The segment covering 258–276 (KTRKPKKQSNKLILRKRKK) has biased composition (basic residues).

Belongs to the universal ribosomal protein uL2 family. As to quaternary structure, part of the 50S ribosomal subunit.

It is found in the plastid. Its subcellular location is the chloroplast. The protein is Large ribosomal subunit protein uL2c (rpl2) of Stigeoclonium helveticum (Green alga).